A 477-amino-acid polypeptide reads, in one-letter code: AAA-ATPase At3g28600 (477 aa).

An N-terminal signal peptide occupies residues 1 to 26 (MMMGNTFGSSLASLFFLWATIQQIFP). ATP is bound at residue 245–252 (GPPGTGKS).

It belongs to the AAA ATPase family. BCS1 subfamily. Mg(2+) is required as a cofactor.

It carries out the reaction ATP + H2O = ADP + phosphate + H(+). The polypeptide is AAA-ATPase At3g28600 (Arabidopsis thaliana (Mouse-ear cress)).